The chain runs to 258 residues: 14-3-3-like protein 16R (258 aa).

Residues 238–258 (DMQDDGTDEIKEAAPKPDNNE) are disordered. The segment covering 245-258 (DEIKEAAPKPDNNE) has biased composition (basic and acidic residues).

This sequence belongs to the 14-3-3 family.

This Solanum tuberosum (Potato) protein is 14-3-3-like protein 16R.